Reading from the N-terminus, the 324-residue chain is MSAAPHASPTTIACLLGPTASGKTAAALALAARRPIEIVSVDSALVYRDMDIGTAKPSRDERASVPHHLIDIIDPADAYSAASFRADTLRLIGEIAARGRTPLLAGGTMLYYKALTQGLNDLPGADPDVRATLDAEAERDGWPALHARLAQVDPDTAARLAPNDSQRIQRALEVFMLSGQPMSVLLAAPRRTDDAAAAYRFVPVALEPSDRAVLHKRIAQRFDAMLDAGFIDEVERLRRREDLHPDLPSMRCVGYRQAWEFLDGDTDYRTMRDKGIFATRQLCKRQITWLRAMPERIVVDCIAPDSTARALDALERVLDGSTPG.

Residue G17–T24 participates in ATP binding. T19–T24 serves as a coordination point for substrate. 4 interaction with substrate tRNA regions span residues D42–L45, Q166–R170, R251–R256, and K284–R291.

The protein belongs to the IPP transferase family. Monomer. Requires Mg(2+) as cofactor.

It carries out the reaction adenosine(37) in tRNA + dimethylallyl diphosphate = N(6)-dimethylallyladenosine(37) in tRNA + diphosphate. Catalyzes the transfer of a dimethylallyl group onto the adenine at position 37 in tRNAs that read codons beginning with uridine, leading to the formation of N6-(dimethylallyl)adenosine (i(6)A). This chain is tRNA dimethylallyltransferase, found in Burkholderia lata (strain ATCC 17760 / DSM 23089 / LMG 22485 / NCIMB 9086 / R18194 / 383).